Here is an 896-residue protein sequence, read N- to C-terminus: Protein argonaute 9 (896 aa).

The PAZ domain occupies 267–380; that stretch reads PVVDFLLANQ…FPIEFCNLVS (114 aa). The Piwi domain maps to 550-857; the sequence is FLLCILAERK…AAAQMGTVMK (308 aa).

This sequence belongs to the argonaute family. Ago subfamily. In terms of tissue distribution, expressed in embryonic shoot apex region, pollen and developing ovules.

Functionally, involved in RNA-mediated post-transcriptional gene silencing (PTGS). Main component of the RNA-induced silencing complex (RISC) that binds to a short guide RNA such as a microRNA (miRNA) or small interfering RNA (siRNA). RISC uses the mature miRNA or siRNA as a guide for slicer-directed cleavage of homologous mRNAs to repress gene expression. Associates preferentially with small RNAs of 24 nucleotide in length with a 5' terminal adenosine. Interacts with 24 nucleotide sRNAs derived from transposable elements (TEs). Required to silence pericentrometric-located TEs in female gametes and their accessory cells. Necessary to inactivate a significant proportion of long terminal repeat retrotransposons (LTRs) in the ovule. Required to specify cell fate in ovule. Involved in the control of female gamete formation by restricting the specification of gametophyte precursors in a dosage-dependent, non-cell-autonomous manner. Targeted by turnip yellows virus (TuYV) protein P0 (via F-box-like domain) for probable proteasome degradation and thereby inactivating AGO9 function in RNA silencing. The polypeptide is Protein argonaute 9 (AGO9) (Arabidopsis thaliana (Mouse-ear cress)).